Here is a 185-residue protein sequence, read N- to C-terminus: Large ribosomal subunit protein uL5 (185 aa).

It belongs to the universal ribosomal protein uL5 family. In terms of assembly, part of the 50S ribosomal subunit; part of the 5S rRNA/L5/L18/L25 subcomplex. Contacts the 5S rRNA and the P site tRNA. Forms a bridge to the 30S subunit in the 70S ribosome.

In terms of biological role, this is one of the proteins that bind and probably mediate the attachment of the 5S RNA into the large ribosomal subunit, where it forms part of the central protuberance. In the 70S ribosome it contacts protein S13 of the 30S subunit (bridge B1b), connecting the 2 subunits; this bridge is implicated in subunit movement. Contacts the P site tRNA; the 5S rRNA and some of its associated proteins might help stabilize positioning of ribosome-bound tRNAs. This is Large ribosomal subunit protein uL5 from Chelativorans sp. (strain BNC1).